Here is a 507-residue protein sequence, read N- to C-terminus: FSD1-like protein (507 aa).

Residues 70 to 109 adopt a coiled-coil conformation; that stretch reads KQEQVRKSQELQSQLSQCNNALENSEELLEFATRSLDIKE. The COS domain occupies 105 to 162; the sequence is LDIKEPEEFSKAARQIKDRVTMASAFRLSLKPKVSDNMTHLMVDFSQERQMLQTLKFL. The Fibronectin type-III domain occupies 164–268; it reads VPKAPEIDPV…DPVTLETRAL (105 aa). Residues 291-484 form the B30.2/SPRY domain; it reads DPTGGKGQES…LSTGMQVPSA (194 aa). The segment at 292–345 is disordered; the sequence is PTGGKGQESKIKGKENKGSVHVTSLKKHTSGTPSPKRTSVGSRPPAVRGSRDRF. Basic and acidic residues predominate over residues 298–309; the sequence is QESKIKGKENKG. The segment covering 321 to 332 has biased composition (polar residues); the sequence is SGTPSPKRTSVG. Phosphoserine occurs at positions 498 and 501.

The chain is FSD1-like protein (Fsd1l) from Mus musculus (Mouse).